Consider the following 260-residue polypeptide: Histidine-binding periplasmic protein (260 aa).

A signal peptide spans 1–22 (MKKLVLSLSLVLAFSSATAAFA). Cys-60 and Cys-67 are joined by a disulfide. The L-histidine site is built by Ser-91, Ser-92, Ser-94, Arg-99, Thr-143, and Asp-183.

Belongs to the bacterial solute-binding protein 3 family. In terms of assembly, the complex is composed of two ATP-binding proteins (HisP), two transmembrane proteins (HisM and HisQ) and a solute-binding protein (HisJ).

The protein localises to the periplasm. Part of the ABC transporter complex HisPMQJ involved in histidine transport. Binds histidine. Interacts with HisQMP and stimulates ATPase activity of HisP, which results in histidine translocation. In Escherichia coli O157:H7, this protein is Histidine-binding periplasmic protein (hisJ).